We begin with the raw amino-acid sequence, 372 residues long: 3 beta-hydroxysteroid dehydrogenase/Delta 5--&gt;4-isomerase type 2 (372 aa).

Catalysis depends on Tyr-154, which acts as the Proton acceptor. Lys-158 provides a ligand contact to NAD(+). The helical transmembrane segment at 287–307 threads the bilayer; it reads LTLMYWIGFLLEVVSFLLSPI.

Belongs to the 3-beta-HSD family. In terms of tissue distribution, expressed in adrenal gland, testis and ovary.

The protein resides in the endoplasmic reticulum membrane. It is found in the mitochondrion membrane. The catalysed reaction is a 3beta-hydroxy-Delta(5)-steroid + NAD(+) = a 3-oxo-Delta(5)-steroid + NADH + H(+). It catalyses the reaction a 3-oxo-Delta(5)-steroid = a 3-oxo-Delta(4)-steroid. The enzyme catalyses pregnenolone + NAD(+) = pregn-5-ene-3,20-dione + NADH + H(+). It carries out the reaction pregn-5-ene-3,20-dione = progesterone. The catalysed reaction is 3beta-hydroxyandrost-5-en-17-one + NAD(+) = androst-5-ene-3,17-dione + NADH + H(+). It catalyses the reaction androst-5-ene-3,17-dione = androst-4-ene-3,17-dione. It functions in the pathway lipid metabolism; steroid biosynthesis. Its function is as follows. 3-beta-HSD is a bifunctional enzyme, that catalyzes the oxidative conversion of Delta(5)-ene-3-beta-hydroxy steroid, and the oxidative conversion of ketosteroids. The 3-beta-HSD enzymatic system plays a crucial role in the biosynthesis of all classes of hormonal steroids. This is 3 beta-hydroxysteroid dehydrogenase/Delta 5--&gt;4-isomerase type 2 from Homo sapiens (Human).